Reading from the N-terminus, the 826-residue chain is Ferric-pyoverdine M114 receptor PbuA (826 aa).

Positions 1–44 (MSASRFMLRPLTRALLMHGATRTRLAGTGLGLALTLTAAPYVQA) are cleaved as a signal peptide. A TonB box motif is present at residues 110-119 (DGNTVTVLGP). One can recognise a TBDR plug domain in the interval 160–271 (SLKETPQSVT…TAGGVNFVRK (112 aa)). The TBDR beta-barrel domain maps to 276-826 (TAHTQLSLSA…NFVMSVKADF (551 aa)). Positions 809 to 826 (GNFYGDPRNFVMSVKADF) match the TonB C-terminal box motif.

The protein belongs to the TonB-dependent receptor family.

It is found in the cell outer membrane. Specific receptor for the siderophore ferric pyoverdine (pseudobactin) M114. This is Ferric-pyoverdine M114 receptor PbuA (pbuA) from Pseudomonas sp. (strain M114).